The primary structure comprises 1876 residues: Vitellogenin-2 (1876 aa).

The first 16 residues, 1 to 16, serve as a signal peptide directing secretion; the sequence is MMWKTLLCCLLAVSAA. In terms of domain architecture, Vitellogenin spans 21 to 838; that stretch reads WEPGKRYEYH…SRDSFMPKSV (818 aa). N-linked (GlcNAc...) asparagine glycosylation is found at N211 and N290. Residues 322–424 form a disordered region; sequence TGEPSQRDSA…SSSSSSEEYL (103 aa). 2 stretches are compositionally biased toward low complexity: residues 330–368 and 387–404; these read SAYA…SSSR and SQPR…SKRS. N-linked (GlcNAc...) asparagine glycosylation occurs at N409. The segment covering 411-420 has biased composition (low complexity); the sequence is SSSSSSSSSS. Residues N595, N631, N932, N1012, and N1055 are each glycosylated (N-linked (GlcNAc...) asparagine). Residues 1192–1239 form a disordered region; sequence SYDNRYTQPEEEEETRQHSKIRRPRSASRKHRRSRHEERAPLENLEVS. A compositionally biased stretch (basic residues) spans 1209 to 1225; that stretch reads HSKIRRPRSASRKHRRS. Residues N1318, N1398, N1417, N1424, N1469, N1532, N1636, N1719, N1760, and N1770 are each glycosylated (N-linked (GlcNAc...) asparagine). A VWFD domain is found at 1518 to 1703; the sequence is PTCVVDYSKV…TLVRDLDRSR (186 aa). C1520 and C1664 are disulfide-bonded. Residues 1729 to 1788 form a disordered region; the sequence is SGIRPYDIDDDSSSSSSSSSSSSSSSSSSKSNSTSSSSSESNESALPRGENKLHRAQQPS. Positions 1741–1772 are enriched in low complexity; that stretch reads SSSSSSSSSSSSSSSSSKSNSTSSSSSESNES.

The protein resides in the secreted. Its function is as follows. Precursor of the egg-yolk proteins that are sources of nutrients during embryonic development. This chain is Vitellogenin-2 (VG2), found in Periplaneta americana (American cockroach).